We begin with the raw amino-acid sequence, 155 residues long: Large ribosomal subunit protein uL22 (155 aa).

Belongs to the universal ribosomal protein uL22 family. As to quaternary structure, part of the 50S ribosomal subunit.

In terms of biological role, this protein binds specifically to 23S rRNA. It makes multiple contacts with different domains of the 23S rRNA in the assembled 50S subunit and ribosome. Its function is as follows. The globular domain of the protein is located near the polypeptide exit tunnel on the outside of the subunit, while an extended beta-hairpin is found that lines the wall of the exit tunnel in the center of the 70S ribosome. This Pyrococcus abyssi (strain GE5 / Orsay) protein is Large ribosomal subunit protein uL22.